The chain runs to 254 residues: Alcohol dehydrogenase 2 (254 aa).

10-33 (FVAGLGGIGFDTSREIVKSGPKNL) contributes to the NAD(+) binding site. Serine 138 lines the substrate pocket. Tyrosine 151 (proton acceptor) is an active-site residue.

Belongs to the short-chain dehydrogenases/reductases (SDR) family. In terms of assembly, homodimer.

The enzyme catalyses a primary alcohol + NAD(+) = an aldehyde + NADH + H(+). It catalyses the reaction a secondary alcohol + NAD(+) = a ketone + NADH + H(+). In Drosophila wheeleri (Fruit fly), this protein is Alcohol dehydrogenase 2 (Adh2).